Consider the following 268-residue polypeptide: 4-hydroxy-tetrahydrodipicolinate reductase (268 aa).

Position 8 to 13 (8 to 13 (GAAGRM)) interacts with NAD(+). An NADP(+)-binding site is contributed by Arg-36. NAD(+)-binding positions include 99-101 (GTT) and 123-126 (AANF). His-156 serves as the catalytic Proton donor/acceptor. His-157 is a binding site for (S)-2,3,4,5-tetrahydrodipicolinate. Lys-160 acts as the Proton donor in catalysis. 166–167 (GT) serves as a coordination point for (S)-2,3,4,5-tetrahydrodipicolinate.

The protein belongs to the DapB family.

The protein localises to the cytoplasm. It catalyses the reaction (S)-2,3,4,5-tetrahydrodipicolinate + NAD(+) + H2O = (2S,4S)-4-hydroxy-2,3,4,5-tetrahydrodipicolinate + NADH + H(+). The catalysed reaction is (S)-2,3,4,5-tetrahydrodipicolinate + NADP(+) + H2O = (2S,4S)-4-hydroxy-2,3,4,5-tetrahydrodipicolinate + NADPH + H(+). It functions in the pathway amino-acid biosynthesis; L-lysine biosynthesis via DAP pathway; (S)-tetrahydrodipicolinate from L-aspartate: step 4/4. Catalyzes the conversion of 4-hydroxy-tetrahydrodipicolinate (HTPA) to tetrahydrodipicolinate. The polypeptide is 4-hydroxy-tetrahydrodipicolinate reductase (Pseudomonas fluorescens (strain Pf0-1)).